We begin with the raw amino-acid sequence, 424 residues long: Tyrosine--tRNA ligase 1 (424 aa).

Tyrosine 37 provides a ligand contact to L-tyrosine. Positions 42-51 (PTADSLHLGH) match the 'HIGH' region motif. 2 residues coordinate L-tyrosine: tyrosine 175 and glutamine 179. Positions 235 to 239 (KFGKT) match the 'KMSKS' region motif. Lysine 238 lines the ATP pocket. The S4 RNA-binding domain maps to 357–414 (ADLQQALVNAGLVPSRGQARTMISSNAVAINGEKQSEPEYLFTDSNRLFDRYTLLRRG).

Belongs to the class-I aminoacyl-tRNA synthetase family. TyrS type 1 subfamily. As to quaternary structure, homodimer.

The protein resides in the cytoplasm. The catalysed reaction is tRNA(Tyr) + L-tyrosine + ATP = L-tyrosyl-tRNA(Tyr) + AMP + diphosphate + H(+). Its function is as follows. Catalyzes the attachment of tyrosine to tRNA(Tyr) in a two-step reaction: tyrosine is first activated by ATP to form Tyr-AMP and then transferred to the acceptor end of tRNA(Tyr). The polypeptide is Tyrosine--tRNA ligase 1 (Photorhabdus laumondii subsp. laumondii (strain DSM 15139 / CIP 105565 / TT01) (Photorhabdus luminescens subsp. laumondii)).